The sequence spans 209 residues: Putative cardiolipin synthase (209 aa).

4 helical membrane passes run 27 to 47, 82 to 102, 126 to 146, and 157 to 177; these read AFVY…ILVF, VTVP…VLTL, VTYV…TILL, and LLAC…WAFV.

The protein belongs to the CDP-alcohol phosphatidyltransferase class-I family.

It is found in the cell membrane. The catalysed reaction is a CDP-1,2-diacyl-sn-glycerol + a 1,2-diacyl-sn-glycero-3-phospho-(1'-sn-glycerol) = a cardiolipin + CMP + H(+). Its pathway is lipid metabolism; phospholipid metabolism. Functionally, may catalyze the biosynthesis of cardiolipin from phosphatidylglycerol (PG) and CDP-diacylglycerol. The polypeptide is Putative cardiolipin synthase (Mycobacterium bovis (strain ATCC BAA-935 / AF2122/97)).